A 113-amino-acid polypeptide reads, in one-letter code: MTMFIVSWTGLPRHFLKKKGGMNLDHGILKDEYIVIEDINICVFAPDKINALLNAIQHFCNLDENEDYLLSKNIDTTLEILKKMNPTVTALNDGVVFQFKEASSIMYKGFNIE.

This is an uncharacterized protein from Acanthamoeba polyphaga mimivirus (APMV).